A 122-amino-acid polypeptide reads, in one-letter code: Ribosome-binding factor A (122 aa).

Belongs to the RbfA family. Monomer. Binds 30S ribosomal subunits, but not 50S ribosomal subunits or 70S ribosomes.

It is found in the cytoplasm. Its function is as follows. One of several proteins that assist in the late maturation steps of the functional core of the 30S ribosomal subunit. Associates with free 30S ribosomal subunits (but not with 30S subunits that are part of 70S ribosomes or polysomes). Required for efficient processing of 16S rRNA. May interact with the 5'-terminal helix region of 16S rRNA. The polypeptide is Ribosome-binding factor A (Pelobacter propionicus (strain DSM 2379 / NBRC 103807 / OttBd1)).